The chain runs to 327 residues: Methionyl-tRNA formyltransferase (327 aa).

121-124 (SLLP) contacts (6S)-5,6,7,8-tetrahydrofolate.

It belongs to the Fmt family.

It carries out the reaction L-methionyl-tRNA(fMet) + (6R)-10-formyltetrahydrofolate = N-formyl-L-methionyl-tRNA(fMet) + (6S)-5,6,7,8-tetrahydrofolate + H(+). Attaches a formyl group to the free amino group of methionyl-tRNA(fMet). The formyl group appears to play a dual role in the initiator identity of N-formylmethionyl-tRNA by promoting its recognition by IF2 and preventing the misappropriation of this tRNA by the elongation apparatus. The chain is Methionyl-tRNA formyltransferase from Burkholderia pseudomallei (strain 1106a).